A 325-amino-acid polypeptide reads, in one-letter code: Geranylgeranyl transferase type-2 subunit beta (325 aa).

PFTB repeat units lie at residues Lys-9–Asp-50, Lys-57–Asp-99, Lys-109–Gly-150, Val-157–Asn-198, Leu-208–Gly-249, and Tyr-256–Gly-298. Geranylgeranyl diphosphate is bound by residues His-183 to Ala-185 and Arg-228 to Trp-240. Asp-234, Cys-236, and His-286 together coordinate Zn(2+).

Belongs to the protein prenyltransferase subunit beta family. Heterodimer of an alpha and a beta subunit. Zn(2+) serves as cofactor.

The catalysed reaction is geranylgeranyl diphosphate + L-cysteinyl-[protein] = S-geranylgeranyl-L-cysteinyl-[protein] + diphosphate. Functionally, catalyzes the transfer of a geranyl-geranyl moiety from geranyl-geranyl pyrophosphate to proteins having the C-terminal -XCC or -XCXC, where both cysteines may become modified. Acts on YPT1 and SEC4. The protein is Geranylgeranyl transferase type-2 subunit beta (BET2) of Saccharomyces cerevisiae (strain ATCC 204508 / S288c) (Baker's yeast).